A 942-amino-acid polypeptide reads, in one-letter code: MGCSVVGNCKSVMLMSRMSWSKLALLISVAMAAAMTDSPPTLICMGILVSVVLNWIVCAVCEEASELILGVSLETTRPSPARVIGEPVFDPRYGYVAPAIYDGKSFDVILPISALSSASTRKETVEMAVENSRLQPLESSQTPKSLVALYSQDLLSGWGSRIKGPDGQEYLLTALHVWETNISHLCKDGKKVPISGCPIVASSADSDLDFVLVSVPKNAWSVLGVGVARLELLKRRTVVTVYGGLDSKTTYCATGVAELENPFRIVTKVTTTGGWSGSPLYHKDAIVGLHLGARPSAGVNRACNVAMAFRVVRKFVTVENSELYPDQSSGPARELDAETYTERLEQGIAFTEYNISGITVKTSDREWTTAEALRVARYKPLGGGKAWGDSDDEDTQETAIRPLNLPAGGLPTGQSALGQLIEYAGYVWRDEGIINSNGMPFRSAGKSSCRFREAVCRAVHRDVRAAETEFPELKELAWPSRGSKAEIGSLLFQAGRFERVEAPANLQLAITNLQAQYPRSRPRSCFRREPWCREDFVAEIEKIAHSGEINLKASPGVPLAEIGVSNQQVIDVAWPLVCEAVVERLHALASVDPRQHDWSPEELVKRGLCDPVRLFVKQEPHSRQKIEQGRFRLISSVSLVDQLVERMLFGPQNTTEIALWHSNPSKPGMGLSKASQVALLWEDLARKHQTHPGAMADISGFDWSVQDWELWADVSMRIELGSFPALMAKAAISRFYCLMNATFQLTNGELLTQELPGLMKSGSYCTSSSNSRIRCLMAELIGSPWCIAMGDDSVEGWVDDAPRKYSALGHLCKEYEACPVLPNGDLKEVSFCSHLISKGRAELETWPKCLFRYLSGPHDVESLEMELSSSRRWGQIVRYLRRIGRVSGNDGEERSSNESPATTKTQGSAAAWGPPQEAWPVDGASLSTFEPSSSGWFHLEGW.

Helical transmembrane passes span 10–30 and 41–61; these read KSVM…ISVA and TLIC…CAVC. A Peptidase S39 domain is found at 129–326; sequence VENSRLQPLE…TVENSELYPD (198 aa). Active-site for protease activity residues include His-176, Asp-209, and Ser-276. Phosphothreonine; by host is present on Thr-339. At Ser-390 the chain carries Phosphoserine; by host. The 115-residue stretch at 691–805 folds into the RdRp catalytic domain; it reads HPGAMADISG…GWVDDAPRKY (115 aa). The interval 888–917 is disordered; that stretch reads GNDGEERSSNESPATTKTQGSAAAWGPPQE. The span at 897–908 shows a compositional bias: polar residues; it reads NESPATTKTQGS.

Post-translationally, the polyprotein is proteolytically cleaved into several chains by the viral protease.

It is found in the host membrane. The catalysed reaction is RNA(n) + a ribonucleoside 5'-triphosphate = RNA(n+1) + diphosphate. Its function is as follows. Responsible for cleavage of polyprotein P2A and replicase polyprotein P2AB. Covalently attached to the 5' extremity of the genomic and subgenomic RNAs. It may serve as a primer for the replicase. In terms of biological role, replicates the viral genome. The protein is Replicase polyprotein P2AB of Dactylis glomerata (Orchard grass).